The following is a 185-amino-acid chain: Protein N-terminal glutamine amidohydrolase (185 aa).

Active-site residues include C14, H62, and D78.

Belongs to the NTAQ1 family. In terms of assembly, monomer.

It catalyses the reaction N-terminal L-glutaminyl-[protein] + H2O = N-terminal L-glutamyl-[protein] + NH4(+). Mediates the side-chain deamidation of N-terminal glutamine residues to glutamate, an important step in N-end rule pathway of protein degradation. Conversion of the resulting N-terminal glutamine to glutamate renders the protein susceptible to arginylation, polyubiquitination and degradation as specified by the N-end rule. Does not act on substrates with internal or C-terminal glutamine and does not act on non-glutamine residues in any position. The sequence is that of Protein N-terminal glutamine amidohydrolase from Caenorhabditis briggsae.